The following is a 404-amino-acid chain: Inner membrane transport protein YdiM (404 aa).

The Periplasmic portion of the chain corresponds to 1–5 (MKNPY). Residues 6–26 (FPTALGLYFNYLVHGMGVLLM) form a helical membrane-spanning segment. The Cytoplasmic segment spans residues 27–43 (SLNMASLETLWQTNAAG). Residues 44 to 64 (VSIVISSLGIGRLSVLLFAGL) traverse the membrane as a helical segment. Over 65-84 (LSDRFGRRPFIMLGMCCYMA) the chain is Periplasmic. The chain crosses the membrane as a helical span at residues 85–105 (FFFGILQTNNIIIAYVFGFLA). Residues 106–132 (GMANSFLDAGTYPSLMEAFPRSPGTAN) lie on the Cytoplasmic side of the membrane. A helical transmembrane segment spans residues 133–153 (ILIKAFVSSGQFLLPLIISLL). Over 154–157 (VWAE) the chain is Periplasmic. The helical transmembrane segment at 158 to 178 (LWFGWSFMIAAGIMFINALFL) threads the bilayer. The Cytoplasmic portion of the chain corresponds to 179–206 (YRCTFPPHPGRRLPVIKKTTSSTEHRCS). The helical transmembrane segment at 207-227 (IIDLASYTLYGYISMATFYLV) threads the bilayer. At 228–246 (SQWLAQYGQFVAGMSYTMS) the chain is on the periplasmic side. A helical membrane pass occupies residues 247-267 (IKLLSIYTVGSLLCVFITAPL). Residues 268–273 (IRNTVR) are Cytoplasmic-facing. The helical transmembrane segment at 274–294 (PTTLLMLYTFISFIALFTVCL) threads the bilayer. Residues 295-296 (HP) lie on the Periplasmic side of the membrane. A helical membrane pass occupies residues 297-317 (TFYVVIIFAFVIGFTSAGGVV). Residues 318–336 (QIGLTLMAERFPYAKGKAT) lie on the Cytoplasmic side of the membrane. Residues 337–357 (GIYYSAGSIATFTIPLITAHL) traverse the membrane as a helical segment. Residues 358-364 (SQRSIAD) are Periplasmic-facing. The chain crosses the membrane as a helical span at residues 365 to 385 (IMWFDTAIAAIGFLLALFIGL). Over 386–404 (RSRKKTRHHSLKENVAPGG) the chain is Cytoplasmic.

It belongs to the major facilitator superfamily.

It is found in the cell inner membrane. The chain is Inner membrane transport protein YdiM (ydiM) from Escherichia coli (strain K12).